The sequence spans 608 residues: Preterminal protein (608 aa).

The Nuclear localization signal motif lies at 338 to 347 (RLPMRRRRRR). The segment at 342–377 (RRRRRRAPPPPPMSEELSEPEVEAFPPASPPRRSFE) is disordered. Ser536 bears the O-(5'-phospho-DNA)-serine mark.

Belongs to the adenoviridae terminal protein family. Heterodimer with the polymerase; this heterodimer binds to bp 9 to 18 of the genome. Interacts with host POU2F1; POU2F1 binds to the auxiliary sequences in the inverted terminal repeats and tethers the pTP-POL heterodimer to the origin DNA thereby participating in the assembly of the pre-initiation complex (POL-TP-DBP-NFIA-POU2F1). In terms of processing, preterminal protein is used to replicate viral genome, upon genomic encapsidation it is processed first into iTP and finally into TP by adenovirus protease.

It localises to the host nucleus matrix. Protein covalently bound to the viral DNA that acts as a primer for viral genomic replication by DNA strand displacement. Assembles on the viral origin of replication in an initiation complex with viral polymerase, DBP, host NFIA and host POU2F1/OCT1. During initiation, the polymerase covalently couples the first dCTP with Ser-580 of pTP. The terminal protein stimulates the template activity over 20 fold compared to protein-free templates. Neo-synthesized viral genomes are linked to two preterminal proteins, one for each 5' end. These new genomes are encapsidated in the nucleus, and during capsid maturation by viral protease, preterminal protein is first cleaved into intermediary (iTP), then into mature TP. May play a role in host nuclear matrix localization of genomic DNA. The sequence is that of Preterminal protein from Canine adenovirus serotype 1 (strain CLL) (CAdV-1).